A 354-amino-acid chain; its full sequence is UDP-N-acetylglucosamine--N-acetylmuramyl-(pentapeptide) pyrophosphoryl-undecaprenol N-acetylglucosamine transferase (354 aa).

Residues 15 to 17, N127, R163, S191, I242, 261 to 266, and Q286 contribute to the UDP-N-acetyl-alpha-D-glucosamine site; these read TGG and ALTVSE.

Belongs to the glycosyltransferase 28 family. MurG subfamily.

It localises to the cell inner membrane. It carries out the reaction di-trans,octa-cis-undecaprenyl diphospho-N-acetyl-alpha-D-muramoyl-L-alanyl-D-glutamyl-meso-2,6-diaminopimeloyl-D-alanyl-D-alanine + UDP-N-acetyl-alpha-D-glucosamine = di-trans,octa-cis-undecaprenyl diphospho-[N-acetyl-alpha-D-glucosaminyl-(1-&gt;4)]-N-acetyl-alpha-D-muramoyl-L-alanyl-D-glutamyl-meso-2,6-diaminopimeloyl-D-alanyl-D-alanine + UDP + H(+). It functions in the pathway cell wall biogenesis; peptidoglycan biosynthesis. Functionally, cell wall formation. Catalyzes the transfer of a GlcNAc subunit on undecaprenyl-pyrophosphoryl-MurNAc-pentapeptide (lipid intermediate I) to form undecaprenyl-pyrophosphoryl-MurNAc-(pentapeptide)GlcNAc (lipid intermediate II). This Pasteurella multocida (strain Pm70) protein is UDP-N-acetylglucosamine--N-acetylmuramyl-(pentapeptide) pyrophosphoryl-undecaprenol N-acetylglucosamine transferase.